A 134-amino-acid chain; its full sequence is MNICISWFRKQTHAGQSMRRKKGVACNNGSFFQRRSRIKAIGNLSVVWRSIKTVIIWEVIYIFAGILLTEEGSDVMRMRILFVIIRIVFPLNFIPPNSKNRPRTIKCKRVLNMTERSNSFRSFRPRSSIDISRP.

This is Citrolysin protein 2 from Citrobacter freundii.